The chain runs to 225 residues: Cytidylate kinase (225 aa).

11–19 (GPAGAGKST) lines the ATP pocket.

This sequence belongs to the cytidylate kinase family. Type 1 subfamily.

Its subcellular location is the cytoplasm. It carries out the reaction CMP + ATP = CDP + ADP. The catalysed reaction is dCMP + ATP = dCDP + ADP. In Shouchella clausii (strain KSM-K16) (Alkalihalobacillus clausii), this protein is Cytidylate kinase.